The primary structure comprises 724 residues: Hyperosmolality-gated Ca2+ permeable channel 3.1 (724 aa).

The Extracellular portion of the chain corresponds to 1-4; it reads MEFG. The chain crosses the membrane as a helical span at residues 5–25; it reads SFLVSLGTSFVIFVILMLLFT. At 26 to 85 the chain is on the cytoplasmic side; that stretch reads WLSRKSGNAPIYYPNRILKGLEPWEGTSLTRNPFAWMREALTSSEQDVVNLSGVDTAVHF. The helical transmembrane segment at 86 to 108 threads the bilayer; sequence VFLSTVLGIFACSSLLLLPTLLP. Topologically, residues 109-147 are extracellular; the sequence is LAATDNNIKNTKNATDTTSKGTFSQLDNLSMANITKKSS. The helical transmembrane segment at 148-170 threads the bilayer; it reads RLWAFLGAVYWISLVTYFFLWKA. At 171–358 the chain is on the cytoplasmic side; the sequence is YKHVSSLRAQ…WQNLNIKLFS (188 aa). The stretch at 241-309 forms a coiled coil; that stretch reads EKLEGYKKKL…KAVLAEKQQT (69 aa). Residues 359-385 traverse the membrane as a helical segment; sequence RIIRQYFIYFFVAVTILFYMIPIAFVS. At 386-411 the chain is on the extracellular side; that stretch reads AITTLKNLQRIIPFIKPVVEITAIRT. The chain crosses the membrane as a helical span at residues 412 to 439; the sequence is VLESFLPQIALIVFLAMLPKLLLFLSKA. Topologically, residues 440-448 are cytoplasmic; the sequence is EGIPSQSHA. A helical transmembrane segment spans residues 449 to 472; it reads IRAASGKYFYFSVFNVFIGVTLAG. The Extracellular segment spans residues 473–497; that stretch reads TLFNTVKDIAKNPKLDMIINLLATS. The helical transmembrane segment at 498–529 threads the bilayer; that stretch reads LPKSATFFLTYVALKFFIGYGLELSRIIPLII. The Cytoplasmic segment spans residues 530–554; sequence FHLKKKYLCKTEAEVKEAWYPGDLS. Residues 555–574 form a helical membrane-spanning segment; sequence YATRVPGDMLILTITFCYSV. Isoleucine 575 is a topological domain (extracellular). The chain crosses the membrane as a helical span at residues 576–594; the sequence is APLILIFGITYFGLGWLVL. Over 595 to 612 the chain is Cytoplasmic; sequence RNQALKVYVPSYESYGRM. Residues 613–636 form a helical membrane-spanning segment; that stretch reads WPHIHQRILAALFLFQVVMFGYLG. At 637–641 the chain is on the extracellular side; sequence AKTFF. The helical transmembrane segment at 642 to 662 threads the bilayer; the sequence is YTALVIPLIITSLIFGYVCRQ. The Cytoplasmic segment spans residues 663–724; that stretch reads KFYGGFEHTA…YQDFNAIAGV (62 aa).

The protein belongs to the CSC1 (TC 1.A.17) family. Homodimer.

Its subcellular location is the membrane. Functionally, acts as a hyperosmolarity-gated non-selective cation channel that permeates Ca(2+) ions. Mechanosensitive ion channel that converts mechanical stimuli into a flow of ions: activated in response to membrane stretch. Not activated in response to membrane poke. This Arabidopsis thaliana (Mouse-ear cress) protein is Hyperosmolality-gated Ca2+ permeable channel 3.1.